The primary structure comprises 748 residues: Malate synthase G (748 aa).

Acetyl-CoA is bound by residues valine 141, 148–149 (RF), serine 298, and arginine 335. The active-site Proton acceptor is arginine 362. Glyoxylate is bound by residues arginine 362, glutamate 453, and 478–481 (GFLD). Residues glutamate 453 and aspartate 481 each coordinate Mg(2+). Proline 562 provides a ligand contact to acetyl-CoA. Position 639 is a cysteine sulfenic acid (-SOH) (cysteine 639). The active-site Proton donor is aspartate 653.

This sequence belongs to the malate synthase family. GlcB subfamily. As to quaternary structure, monomer. It depends on Mg(2+) as a cofactor.

The protein resides in the cytoplasm. The enzyme catalyses glyoxylate + acetyl-CoA + H2O = (S)-malate + CoA + H(+). Its pathway is carbohydrate metabolism; glyoxylate cycle; (S)-malate from isocitrate: step 2/2. Functionally, involved in the glycolate utilization. Catalyzes the condensation and subsequent hydrolysis of acetyl-coenzyme A (acetyl-CoA) and glyoxylate to form malate and CoA. The protein is Malate synthase G of Corynebacterium efficiens (strain DSM 44549 / YS-314 / AJ 12310 / JCM 11189 / NBRC 100395).